Consider the following 687-residue polypeptide: MAKDYLFEIGTEEIPAHVVPRSVKQLADRTRKFLKENGLKFKDIKTFSTPRRLTILVEDLAEKQDDIDEVKKGPAKKITQDADGNWTKAAQGFARGQGMTTDDIYFEELKGTEYAYVHVQKEGKKASDILLGMSDIIKAMTFPTKMRWDSNDFEFVRPIHWLVSLFGSDVIPVKILDITAGRKTQGHRFLGDSVVLANADDYEDALKDQYVIANAEERKDMIVNQMNELVKKNHWQIKPDRDLLEEVTYLVEYPTVFAGSFDEKYLNIPDEVLITSMKDNQRYFEVYDENGKLINHFIAVRNGNKDYLDNIISGNEKVLVARLDDAQFFYDEDRKYPLSHFVDRLKNVSFHDKIGSMAEKIQRVRMIGDYLAKRWDLPENVVTDFDRASELYKFDLVTQMVGEFAELQGVMGMHYARLAGEDEEVSVAIKEHYMPATAEGPLPETTVGSLLSVADKIDTIITFFGAGMIPTSSNDPYALRRYAYGIVRILLNEKWSLPFNEVLPEIINMLGGVTPAKLPKGDSEQEIADFIRDRVKQYLQKNKFKYDIVDAVLASSQQDPSQILAAANVLQLHHDDEEFKPVVESLTRINNILKKAKFNGKVDVDESLFVDNSETELYARVQNLQNIESLADLYQGFVHLQPVIDQYFEANMIMDKDENVKNNRLAQLYAVSELADRLGDLSKLVIK.

The protein belongs to the class-II aminoacyl-tRNA synthetase family. Tetramer of two alpha and two beta subunits.

It localises to the cytoplasm. It catalyses the reaction tRNA(Gly) + glycine + ATP = glycyl-tRNA(Gly) + AMP + diphosphate. The chain is Glycine--tRNA ligase beta subunit from Lactobacillus helveticus (strain DPC 4571).